The chain runs to 180 residues: Translation initiation factor IF-3 (180 aa).

Belongs to the IF-3 family. In terms of assembly, monomer.

The protein resides in the cytoplasm. IF-3 binds to the 30S ribosomal subunit and shifts the equilibrium between 70S ribosomes and their 50S and 30S subunits in favor of the free subunits, thus enhancing the availability of 30S subunits on which protein synthesis initiation begins. This Pectobacterium atrosepticum (strain SCRI 1043 / ATCC BAA-672) (Erwinia carotovora subsp. atroseptica) protein is Translation initiation factor IF-3.